We begin with the raw amino-acid sequence, 531 residues long: Polypyrimidine tract-binding protein 2 (531 aa).

N-acetylmethionine is present on M1. Phosphoserine is present on residues S26 and S27. 2 RRM domains span residues 59 to 133 (RVLH…YSNH) and 181 to 257 (LRII…FSKL). At S308 the chain carries Phosphoserine. RRM domains follow at residues 338-412 (TVLL…LSKH) and 455-529 (ATLH…FSKS).

In terms of assembly, monomer. Interacts with NOVA1; the interaction is direct. Identified in a mRNP complex, at least composed of DHX9, DDX3X, ELAVL1, HNRNPU, IGF2BP1, ILF3, PABPC1, PCBP2, PTBP2, STAU1, STAU2, SYNCRIP and YBX1. Part of a ternary complex containing KHSRP and HNRPH1. Interacts with NOVA2; the interaction is direct. In terms of tissue distribution, mainly expressed in brain although also detected in other tissues like heart and skeletal muscle. Isoform 1 and isoform 2 are specifically expressed in neuronal tissues. Isoform 3 and isoform 4 are expressed in non-neuronal tissues. Isoform 5 and isoform 6 are truncated forms expressed in non-neuronal tissues.

Its subcellular location is the nucleus. Functionally, RNA-binding protein which binds to intronic polypyrimidine tracts and mediates negative regulation of exons splicing. May antagonize in a tissue-specific manner the ability of NOVA1 to activate exon selection. In addition to its function in pre-mRNA splicing, plays also a role in the regulation of translation. In terms of biological role, reduced affinity for RNA. The chain is Polypyrimidine tract-binding protein 2 from Homo sapiens (Human).